Here is an 842-residue protein sequence, read N- to C-terminus: Protein translocase subunit SecA 1 (842 aa).

Residues Gln-85, 103–107 (GEGKT), and Asp-493 each bind ATP. Residues Cys-824, Cys-826, Cys-835, and His-836 each contribute to the Zn(2+) site.

This sequence belongs to the SecA family. As to quaternary structure, monomer and homodimer. Part of the essential Sec protein translocation apparatus which comprises SecA, SecYEG and auxiliary proteins SecDF. Other proteins may also be involved. It depends on Zn(2+) as a cofactor.

Its subcellular location is the cell membrane. The protein resides in the cytoplasm. It carries out the reaction ATP + H2O + cellular proteinSide 1 = ADP + phosphate + cellular proteinSide 2.. Functionally, part of the Sec protein translocase complex. Interacts with the SecYEG preprotein conducting channel. Has a central role in coupling the hydrolysis of ATP to the transfer of proteins into and across the cell membrane, serving as an ATP-driven molecular motor driving the stepwise translocation of polypeptide chains across the membrane. The protein is Protein translocase subunit SecA 1 of Streptococcus agalactiae serotype Ia (strain ATCC 27591 / A909 / CDC SS700).